Reading from the N-terminus, the 1310-residue chain is Contactin-associated protein-like 4 (1310 aa).

The signal sequence occupies residues 1-27 (MNMGSVAGAVLKMLLLLSTQNWNRVEA). Residues 28 to 1243 (GNSYDCDEPL…LTHAIKSDSA (1216 aa)) are Extracellular-facing. The F5/8 type C domain occupies 33 to 179 (CDEPLVSALP…IGMRIEVFGC (147 aa)). Residues Cys-33 and Cys-179 are joined by a disulfide bond. Residues 214–346 (FKTMESDGIL…NLFYNGVDVI (133 aa)) enclose the Laminin G-like 1 domain. N-linked (GlcNAc...) asparagine glycosylation is found at Asn-262, Asn-287, and Asn-361. 4 disulfide bridges follow: Cys-334-Cys-366, Cys-517-Cys-549, Cys-555-Cys-566, and Cys-560-Cys-575. The Laminin G-like 2 domain occupies 400 to 529 (FRTWNKAGLL…LISINNKMVD (130 aa)). N-linked (GlcNAc...) asparagine glycosylation occurs at Asn-540. The region spanning 551–588 (ISDRCLPNSCEHGGECSQSWSTFHCNCTNTGYTGATCH) is the EGF-like 1 domain. An N-linked (GlcNAc...) asparagine glycan is attached at Asn-576. A disulfide bond links Cys-577 and Cys-587. A Fibrinogen C-terminal domain is found at 589–794 (SSVYEQSCEA…LLCRGDRPFW (206 aa)). N-linked (GlcNAc...) asparagine glycans are attached at residues Asn-604, Asn-627, Asn-639, Asn-708, and Asn-750. The region spanning 795–960 (NAASFNTEAS…TVTPGVQPGC (166 aa)) is the Laminin G-like 3 domain. 4 disulfides stabilise this stretch: Cys-933/Cys-960, Cys-964/Cys-977, Cys-971/Cys-986, and Cys-988/Cys-998. The 40-residue stretch at 960–999 (CRGHCGSYGKLCRHGGKCREKPSGFFCDCSSSAYAGPFCS) folds into the EGF-like 2 domain. 3 N-linked (GlcNAc...) asparagine glycosylation sites follow: Asn-1019, Asn-1025, and Asn-1075. The Laminin G-like 4 domain occupies 1048-1204 (FRTTRAPSLL…VTGHVTESSC (157 aa)). Residues Cys-1169 and Cys-1204 are joined by a disulfide bond. A helical transmembrane segment spans residues 1244–1264 (VIGGLIAVVIFILLCVSAIAV). Over 1265–1310 (RIYQQKRLYKRNEAKRSENVDSAEAVLKSELHIQNAVGENQKEYFF) the chain is Cytoplasmic.

This sequence belongs to the neurexin family. As to quaternary structure, interacts with TIAM1. In terms of tissue distribution, specifically present in developing cortical interneurons: highly expressed in cortical parvalbumin (PV) cells and midbrain dopaminergic neurons and is localized presynaptically (at protein level). Also present in the substantia nigra pars compacta (SnC) and ventral tegmental area (VTA) midbrain dopaminergic projection populations.

The protein resides in the presynaptic cell membrane. Presynaptic protein involved in both dopaminergic synaptic transmission and GABAergic system, thereby participating in the structural maturation of inhibitory interneuron synapses. Involved in the dopaminergic synaptic transmission by attenuating dopamine release through a presynaptic mechanism. Also participates in the GABAergic system. The protein is Contactin-associated protein-like 4 (Cntnap4) of Mus musculus (Mouse).